Consider the following 898-residue polypeptide: Transportin-1 (898 aa).

HEAT repeat units lie at residues 19–46 (GLQQILQLLKESQSPDTTIQRTVQQKLE), 51–89 (YPDFNNYLIFVLTKLKSEDEPTRSLSGLILKNNVKAHFQ), 98–131 (FIKSECLNNIGDSSPLIRATVGILITTIASKGEL), 137–174 (LLPKLCSLLDSEDYNTCEGAFGALQKICEDSAEILDSD), 181–211 (NIMIPKFLQFFKHSSPKIRSHAVACVNQFII), 224–251 (FIENLFALAGDEEAEVRKNVCRALVMLL), 263–290 (HNIVEYMLQRTQDQDENVALEACEFWLT), 306–397 (PKLI…LANV), 405–433 (HILPLLKELLFHHEWVVKESGILVLGAIA), 445–472 (PELIPHLIQCLSDKKALVRSITCWTLSR), 486–519 (LKPLMTELLKRILDSNKRVQEAACSAFATLEEEA), 527–560 (LAYILDTLVFAFSKYQHKNLLILYDAIGTLADSV), 568–606 (EYIQMLMPPLIQKWNMLKDEDKDLFPLLECLSSVATALQ), 614–665 (EPVY…GLGG), 676–707 (ILTLMYQCMQDKMPEVRQSSFALLGDLTKACF), 715–748 (ADFMPILGTNLNPEFISVCNNATWAIGEISIQMG), 756–791 (PMVLHQLVEIINRPNTPKTLLENTAITIGRLGYVCP), 799–832 (QQFIRPWCTSLRNIRDNEEKDSAFRGICTMISVN), 841–872 (IFFCDAVASWINPKDDLRDMFCKILHGFKNQV), and 875–895 (ENWRRFSDQFPLPLKERLAAF). The Importin N-terminal domain occupies 41–109 (VQQKLEQLNQ…KSECLNNIGD (69 aa)). The disordered stretch occupies residues 347 to 374 (FHRSRTVAQQHEEDGIEEEDDDDDEIDD). Positions 360–374 (DGIEEEDDDDDEIDD) are enriched in acidic residues.

Belongs to the importin beta family. Importin beta-2 subfamily. In terms of assembly, identified in a complex that contains TNPO1, RAN and RANBP1. Binds HNRPA1, HNRPA2, HNRNPDL, RPS7, RPL5 and RAN. Interacts with H2A, H2B, H3 and H4 histones. Interacts with isoform 1 and isoform 5 of ADAR/ADAR1 (via DRBM 3 domain). Interacts with SNAI1 (via zinc fingers); the interaction mediates SNAI1 nuclear import. Interacts with SNAI2 (via zinc fingers). Interacts with RPL23A (via BIB domain) and SRP19; this interaction is involved in RPL23A and SRP19 import into the nucleus. Interacts (via HEAT repeats 8-12) with BAP1 (via non-classical PY-NLS); this interaction is direct, is involved in BAP1 nuclear import and disrupts BAP1 homodimerization.

The protein localises to the cytoplasm. It is found in the nucleus. In terms of biological role, functions in nuclear protein import as nuclear transport receptor. Serves as receptor for nuclear localization signals (NLS) in cargo substrates. May mediate docking of the importin/substrate complex to the nuclear pore complex (NPC) through binding to nucleoporin and the complex is subsequently translocated through the pore by an energy requiring, Ran-dependent mechanism. At the nucleoplasmic side of the NPC, Ran binds to the importin, the importin/substrate complex dissociates and importin is re-exported from the nucleus to the cytoplasm where GTP hydrolysis releases Ran. The directionality of nuclear import is thought to be conferred by an asymmetric distribution of the GTP- and GDP-bound forms of Ran between the cytoplasm and nucleus. Involved in nuclear import of M9-containing proteins. In vitro, binds directly to the M9 region of the heterogeneous nuclear ribonucleoproteins (hnRNP), A1 and A2 and mediates their nuclear import. Involved in hnRNP A1/A2 nuclear export. Mediates the nuclear import of ribosomal proteins RPL23A, RPS7 and RPL5. In vitro, mediates nuclear import of SRP19. Mediates the import of histones H2A, H2B, H3 and H4. Mediates nuclear import of ADAR/ADAR1 in a RanGTP-dependent manner. Main mediator of PR-DUB complex component BAP1 nuclear import; acts redundantly with the karyopherins KPNA1 and KPNA2. The sequence is that of Transportin-1 (Tnpo1) from Mus musculus (Mouse).